Reading from the N-terminus, the 445-residue chain is Enolase 1 (445 aa).

The substrate site is built by H164 and E173. E216 acts as the Proton donor in catalysis. Residues D251, E301, and D328 each coordinate Mg(2+). E301 and D328 together coordinate substrate. Residue K353 is the Proton acceptor of the active site. Residues 380–383 and K404 each bind substrate; that span reads SHRS.

The protein belongs to the enolase family. As to quaternary structure, homodimer. Mg(2+) serves as cofactor.

The protein resides in the cytoplasm. The catalysed reaction is (2R)-2-phosphoglycerate = phosphoenolpyruvate + H2O. The protein operates within carbohydrate degradation; glycolysis; pyruvate from D-glyceraldehyde 3-phosphate: step 4/5. In Hevea brasiliensis (Para rubber tree), this protein is Enolase 1 (ENO1).